The following is a 476-amino-acid chain: Vitamin D-binding protein (476 aa).

An N-terminal signal peptide occupies residues 1–16 (MKRVLVLLLALAFGHA). Albumin domains are found at residues 17-208 (LERG…QMKQ), 209-394 (LLLL…LMKR), and 395-476 (QLTS…ILQS). Cystine bridges form between Cys-29/Cys-75, Cys-74/Cys-83, Cys-96/Cys-112, Cys-111/Cys-122, Cys-145/Cys-190, Cys-189/Cys-198, Cys-220/Cys-266, Cys-265/Cys-273, Cys-286/Cys-300, Cys-299/Cys-311, Cys-335/Cys-376, Cys-375/Cys-384, Cys-407/Cys-453, and Cys-452/Cys-462. N-linked (GlcNAc...) asparagine glycosylation is present at Asn-288. Ser-434 carries the phosphoserine modification.

Belongs to the ALB/AFP/VDB family. As to quaternary structure, associates with membrane-bound immunoglobulin on the surface of B-lymphocytes and with IgG Fc receptor on the membranes of T-lymphocytes. Interacts with LRP2; the interaction is required for renal uptake of GC in complex with 25-hydroxyvitamin D3.

Its subcellular location is the secreted. Involved in vitamin D transport and storage, scavenging of extracellular G-actin, enhancement of the chemotactic activity of C5 alpha for neutrophils in inflammation and macrophage activation. This is Vitamin D-binding protein (Gc) from Rattus norvegicus (Rat).